Here is a 265-residue protein sequence, read N- to C-terminus: GTP cyclohydrolase FolE2 (265 aa).

Belongs to the GTP cyclohydrolase IV family.

The enzyme catalyses GTP + H2O = 7,8-dihydroneopterin 3'-triphosphate + formate + H(+). The protein operates within cofactor biosynthesis; 7,8-dihydroneopterin triphosphate biosynthesis; 7,8-dihydroneopterin triphosphate from GTP: step 1/1. Functionally, converts GTP to 7,8-dihydroneopterin triphosphate. In Magnetococcus marinus (strain ATCC BAA-1437 / JCM 17883 / MC-1), this protein is GTP cyclohydrolase FolE2.